Reading from the N-terminus, the 340-residue chain is Tetrathionate reductase subunit C (340 aa).

Helical transmembrane passes span 19–39, 57–77, 94–114, 128–148, 164–184, 195–215, 236–256, 266–286, and 306–326; these read WLPW…AALF, ALLI…ADLH, WMPW…LWFL, VTKW…IYTG, AFPV…MIVA, ILWG…MWVS, YYAV…SLAL, VLLV…LLIQ, and TDGW…LIII.

It belongs to the NrfD family. In terms of assembly, probably composed of three subunits: TtrA, TtrB and TtrC.

Its subcellular location is the cell inner membrane. In terms of biological role, part of a membrane-bound tetrathionate reductase that catalyzes the reduction of tetrathionate to thiosulfate. TtrC probably anchors TtrA and TtrB to the periplasmic face of the cytoplasmic membrane. May transfer electrons from membrane quinol to TtrB. During mice infection, the ability to use tetrathionate as an electron acceptor is a growth advantage for S.typhimurium over the competing microbiota in the lumen of the inflamed gut. This chain is Tetrathionate reductase subunit C (ttrC), found in Salmonella typhimurium (strain LT2 / SGSC1412 / ATCC 700720).